The chain runs to 356 residues: Holliday junction branch migration complex subunit RuvB (356 aa).

A large ATPase domain (RuvB-L) region spans residues Thr4–Tyr191. ATP is bound by residues Leu30, Arg31, Gly72, Lys75, Thr76, Thr77, Glu138–Tyr140, Arg181, Tyr191, and Arg228. A Mg(2+)-binding site is contributed by Thr76. A small ATPAse domain (RuvB-S) region spans residues Asp192–Asp262. The interval Pro265 to Lys356 is head domain (RuvB-H). DNA-binding residues include Arg301, Arg320, and Arg325.

It belongs to the RuvB family. In terms of assembly, homohexamer. Forms an RuvA(8)-RuvB(12)-Holliday junction (HJ) complex. HJ DNA is sandwiched between 2 RuvA tetramers; dsDNA enters through RuvA and exits via RuvB. An RuvB hexamer assembles on each DNA strand where it exits the tetramer. Each RuvB hexamer is contacted by two RuvA subunits (via domain III) on 2 adjacent RuvB subunits; this complex drives branch migration. In the full resolvosome a probable DNA-RuvA(4)-RuvB(12)-RuvC(2) complex forms which resolves the HJ.

Its subcellular location is the cytoplasm. It catalyses the reaction ATP + H2O = ADP + phosphate + H(+). The RuvA-RuvB-RuvC complex processes Holliday junction (HJ) DNA during genetic recombination and DNA repair, while the RuvA-RuvB complex plays an important role in the rescue of blocked DNA replication forks via replication fork reversal (RFR). RuvA specifically binds to HJ cruciform DNA, conferring on it an open structure. The RuvB hexamer acts as an ATP-dependent pump, pulling dsDNA into and through the RuvAB complex. RuvB forms 2 homohexamers on either side of HJ DNA bound by 1 or 2 RuvA tetramers; 4 subunits per hexamer contact DNA at a time. Coordinated motions by a converter formed by DNA-disengaged RuvB subunits stimulates ATP hydrolysis and nucleotide exchange. Immobilization of the converter enables RuvB to convert the ATP-contained energy into a lever motion, pulling 2 nucleotides of DNA out of the RuvA tetramer per ATP hydrolyzed, thus driving DNA branch migration. The RuvB motors rotate together with the DNA substrate, which together with the progressing nucleotide cycle form the mechanistic basis for DNA recombination by continuous HJ branch migration. Branch migration allows RuvC to scan DNA until it finds its consensus sequence, where it cleaves and resolves cruciform DNA. This chain is Holliday junction branch migration complex subunit RuvB, found in Burkholderia cenocepacia (strain ATCC BAA-245 / DSM 16553 / LMG 16656 / NCTC 13227 / J2315 / CF5610) (Burkholderia cepacia (strain J2315)).